Reading from the N-terminus, the 286-residue chain is ATP synthase gamma chain (286 aa).

This sequence belongs to the ATPase gamma chain family. In terms of assembly, F-type ATPases have 2 components, CF(1) - the catalytic core - and CF(0) - the membrane proton channel. CF(1) has five subunits: alpha(3), beta(3), gamma(1), delta(1), epsilon(1). CF(0) has three main subunits: a, b and c.

It is found in the cell inner membrane. In terms of biological role, produces ATP from ADP in the presence of a proton gradient across the membrane. The gamma chain is believed to be important in regulating ATPase activity and the flow of protons through the CF(0) complex. The chain is ATP synthase gamma chain from Pseudomonas putida (strain GB-1).